A 591-amino-acid polypeptide reads, in one-letter code: L-lactate dehydrogenase (cytochrome) (591 aa).

A mitochondrion-targeting transit peptide spans 1–80 (MLKYKPLLKI…LNWHNGQIDN (80 aa)). Residues 88–165 (KQKISPAEVA…APEKKLGPLQ (78 aa)) enclose the Cytochrome b5 heme-binding domain. The heme b site is built by His123, His146, Tyr177, Gln219, and Tyr223. The FMN hydroxy acid dehydrogenase domain maps to 197 to 563 (PPLDNIINLY…KPDLLDLSTL (367 aa)). Tyr223 is a binding site for pyruvate. FMN-binding positions include 275–278 (SATA), Ser308, and Gln332. Tyr334 contacts pyruvate. Thr360 contacts FMN. Lys376 is a binding site for heme b. Position 429 (Lys429) interacts with FMN. Positions 453 and 456 each coordinate pyruvate. The active-site Proton acceptor is the His453. Residues 489–493 (DGGVR) and 512–513 (GR) contribute to the FMN site.

In the N-terminal section; belongs to the cytochrome b5 family. This sequence in the C-terminal section; belongs to the FMN-dependent alpha-hydroxy acid dehydrogenase family. As to quaternary structure, homotetramer. The cofactor is FMN. It depends on heme b as a cofactor.

It is found in the mitochondrion intermembrane space. It catalyses the reaction (S)-lactate + 2 Fe(III)-[cytochrome c] = 2 Fe(II)-[cytochrome c] + pyruvate + 2 H(+). Catalyzes the oxidation of (S)-lactate (L-lactate) to pyruvate with subsequent transfer of electrons to cytochrome c. Is involved in the utilization of (S)-lactate as a sole source of carbon for growth. Can also use ferricyanide as an electron acceptor in vitro. The polypeptide is L-lactate dehydrogenase (cytochrome) (CYB2) (Saccharomyces cerevisiae (strain ATCC 204508 / S288c) (Baker's yeast)).